Consider the following 471-residue polypeptide: MAEAIEKVADKVADLVVDDKPAAVPESTSDHEDGDDNDDAVNEGEAVDGEKKKKKKKNKKKKKKGPAVQTEPPTVPIDRFFTSGIFPEGEICEHPHKTFKPKGTAVDPFADSEDEREAAEERAKDDAKHGSDDPLDFNRLRTTNEEKRYLDREQAAVHNEWRKGAEIHRVVRKYARDNIKAGMTMTSIAEMIEDSVRALSNEEDSLKGGQGFPTGVSLNHCAAHYTPNAGDKIVLKEDDVLKVDFGVHVNGKIIDSAFTHVQNDKWQGLLDAVKAATETGIREAGIDVRLGDIGEAIQETMESHEVEVDGKVYQVKSIRNLNGHNIAPYEIHGGKSVPIVKSADMTKMEEGETFAIETFGSTGRGYVVTDGECSHYAKNVGVGHVPLRVNKAKQLLATIDKNFGTLPFCRRYLDRLGEEKYLLALKNLVQSGVVQDYPPLVDQKGCQTAQYEHTIYLRPTCKEILSRGDDY.

2 disordered regions span residues 16–80 (VVDD…IDRF) and 92–139 (CEHP…DFNR). Residues 32-47 (EDGDDNDDAVNEGEAV) show a composition bias toward acidic residues. Basic residues predominate over residues 52 to 65 (KKKKKKNKKKKKKG). Basic and acidic residues predominate over residues 119–139 (AEERAKDDAKHGSDDPLDFNR). His-224 serves as a coordination point for substrate. A divalent metal cation contacts are provided by Asp-244, Asp-255, and His-324. His-332 serves as a coordination point for substrate. Glu-357 and Glu-452 together coordinate a divalent metal cation.

The protein belongs to the peptidase M24A family. Methionine aminopeptidase eukaryotic type 2 subfamily. Co(2+) is required as a cofactor. Zn(2+) serves as cofactor. Requires Mn(2+) as cofactor. It depends on Fe(2+) as a cofactor.

It localises to the cytoplasm. The catalysed reaction is Release of N-terminal amino acids, preferentially methionine, from peptides and arylamides.. In terms of biological role, cotranslationally removes the N-terminal methionine from nascent proteins. The N-terminal methionine is often cleaved when the second residue in the primary sequence is small and uncharged (Met-Ala-, Cys, Gly, Pro, Ser, Thr, or Val). This chain is Methionine aminopeptidase 2, found in Yarrowia lipolytica (strain CLIB 122 / E 150) (Yeast).